A 208-amino-acid polypeptide reads, in one-letter code: uncharacterized protein (208 aa).

This is an uncharacterized protein from Saccharum officinarum (Sugarcane).